We begin with the raw amino-acid sequence, 584 residues long: MNNHIEALSYYLGAFVDELTRLDVCDVVISPGSRSTPIALLMEQHEGMNTYLHVDERSAGFFALGIAKAKKRPVALLCTSGTAAANYYPAVCEAFHSRVPLIVLTADRPHELRDVGAPQAMNQFNLYGTFVKQFTEMALPEASEAMYHYARMTTQRIVANACLAPQGPVHLNFPVREPLIPDFSLESLWDKGRSEYTGVVQQGNAVMPSEYVDSLVGRLSHMEKGLIICGDDSHAEIAMFATQLAEKTGYPILADPLSNIRSGHHDKTMVIDCYDTFLRNEKLKETWNGDVLIRFGGMPVSKSLTQFIKKQTKAVHIVVDESGQWRDPALVATEVVQASDIEFCKAAIEKMPVMKKNDWSLMWQHINEKTKETLREMETYETAFEGKVITDIVRVLPEDATLFASNSMPIRDTDSFFFTSDKNIHVMANRGVNGIDGIISTALGASVICDPLVLVIGDLSFYHDLNGLLAAKLHELNITIVVVNNDGGGIFSFLPQYEKKEHFESLFGTPIGLDYEHVVKMYGGSFSRVNGWEQFREEVRKGTTTEGLHVVEICTNRDENLTLHRTLWAKTMDVITTSLQGESK.

It belongs to the TPP enzyme family. MenD subfamily. Homodimer. Requires Mg(2+) as cofactor. The cofactor is Mn(2+). It depends on thiamine diphosphate as a cofactor.

The catalysed reaction is isochorismate + 2-oxoglutarate + H(+) = 5-enolpyruvoyl-6-hydroxy-2-succinyl-cyclohex-3-ene-1-carboxylate + CO2. It participates in quinol/quinone metabolism; 1,4-dihydroxy-2-naphthoate biosynthesis; 1,4-dihydroxy-2-naphthoate from chorismate: step 2/7. Its pathway is quinol/quinone metabolism; menaquinone biosynthesis. Its function is as follows. Catalyzes the thiamine diphosphate-dependent decarboxylation of 2-oxoglutarate and the subsequent addition of the resulting succinic semialdehyde-thiamine pyrophosphate anion to isochorismate to yield 2-succinyl-5-enolpyruvyl-6-hydroxy-3-cyclohexene-1-carboxylate (SEPHCHC). The sequence is that of 2-succinyl-5-enolpyruvyl-6-hydroxy-3-cyclohexene-1-carboxylate synthase from Bacillus cereus (strain ATCC 14579 / DSM 31 / CCUG 7414 / JCM 2152 / NBRC 15305 / NCIMB 9373 / NCTC 2599 / NRRL B-3711).